Here is an 879-residue protein sequence, read N- to C-terminus: Pyruvate dehydrogenase phosphatase regulatory subunit, mitochondrial (879 aa).

The transit peptide at 1–27 directs the protein to the mitochondrion; the sequence is MMFYRLLSIVGRQRASPGWQNWSSARN.

Belongs to the GcvT family. Heterodimer of a catalytic (PDP1) and a regulatory (PDPR) subunit.

It is found in the mitochondrion matrix. Decreases the sensitivity of PDP1 to magnesium ions, and this inhibition is reversed by the polyamine spermine. The sequence is that of Pyruvate dehydrogenase phosphatase regulatory subunit, mitochondrial (PDPR) from Homo sapiens (Human).